The sequence spans 328 residues: MVKLAIDMMGGDNAPDIVLEAVQKAVEDFKDLEIILFGDEKKYNLNHERIEFRHCSEKIEMEDEPVRAIKRKKDSSMVKMAEAVKSGEADGCVSAGNTGALMSAGLFIVGRIKGVARPALVVTLPTIDGKGFVFLDVGANADAKPEHLLQYAQLGDIYAQKIRGIDNPKISLLNIGTEPAKGNSLTKKSYELLNHDHSLNFVGNIEAKTLMDGDTDVVVTDGYTGNMVLKNLEGTAKSIGKMLKDTIMSSTKNKLAGAILKKDLAEFAKKMDYSEYGGSVLLGLEGTVVKAHGSSNAKAFYSAIRQAKIAGEQNIVQTMKETVGESNE.

It belongs to the PlsX family. Homodimer. Probably interacts with PlsY.

It localises to the cytoplasm. It carries out the reaction a fatty acyl-[ACP] + phosphate = an acyl phosphate + holo-[ACP]. It participates in lipid metabolism; phospholipid metabolism. Functionally, catalyzes the reversible formation of acyl-phosphate (acyl-PO(4)) from acyl-[acyl-carrier-protein] (acyl-ACP). This enzyme utilizes acyl-ACP as fatty acyl donor, but not acyl-CoA. This chain is Phosphate acyltransferase, found in Staphylococcus aureus (strain USA300).